Here is a 955-residue protein sequence, read N- to C-terminus: Glycine dehydrogenase (decarboxylating) (955 aa).

Residue Lys705 is modified to N6-(pyridoxal phosphate)lysine.

This sequence belongs to the GcvP family. The glycine cleavage system is composed of four proteins: P, T, L and H. Requires pyridoxal 5'-phosphate as cofactor.

It catalyses the reaction N(6)-[(R)-lipoyl]-L-lysyl-[glycine-cleavage complex H protein] + glycine + H(+) = N(6)-[(R)-S(8)-aminomethyldihydrolipoyl]-L-lysyl-[glycine-cleavage complex H protein] + CO2. Functionally, the glycine cleavage system catalyzes the degradation of glycine. The P protein binds the alpha-amino group of glycine through its pyridoxal phosphate cofactor; CO(2) is released and the remaining methylamine moiety is then transferred to the lipoamide cofactor of the H protein. The chain is Glycine dehydrogenase (decarboxylating) from Aliivibrio fischeri (strain ATCC 700601 / ES114) (Vibrio fischeri).